Consider the following 334-residue polypeptide: Formamidase (334 aa).

The CN hydrolase domain maps to Phe14–Pro260. The active-site Proton acceptor is the Glu60. Lys133 acts as the Proton donor in catalysis. Cys166 acts as the Nucleophile in catalysis.

The protein belongs to the carbon-nitrogen hydrolase superfamily. Aliphatic amidase family.

The catalysed reaction is formamide + H2O = formate + NH4(+). Functionally, is an aliphatic amidase with a restricted substrate specificity, as it only hydrolyzes formamide. This is Formamidase from Helicobacter pylori (strain G27).